The sequence spans 190 residues: dCTP deaminase (190 aa).

113–118 (KSTYAR) contacts dCTP. The active-site Proton donor/acceptor is glutamate 139. Residues glutamine 158, tyrosine 172, lysine 181, and glutamine 182 each contribute to the dCTP site.

Belongs to the dCTP deaminase family. Homotrimer.

The catalysed reaction is dCTP + H2O + H(+) = dUTP + NH4(+). It functions in the pathway pyrimidine metabolism; dUMP biosynthesis; dUMP from dCTP (dUTP route): step 1/2. Functionally, catalyzes the deamination of dCTP to dUTP. The polypeptide is dCTP deaminase (Chlamydia felis (strain Fe/C-56) (Chlamydophila felis)).